The sequence spans 774 residues: Ent-beyerene synthase KSL4, chloroplastic (774 aa).

A chloroplast-targeting transit peptide spans M1–V35. Mg(2+) is bound by residues D525, D529, N668, D669, T672, and E676. A DDXXD motif motif is present at residues D525–D529.

Belongs to the terpene synthase family. It depends on Mg(2+) as a cofactor.

It is found in the plastid. The protein localises to the chloroplast. The catalysed reaction is ent-copalyl diphosphate = ent-beyerene + diphosphate. It catalyses the reaction ent-copalyl diphosphate = ent-atiserene + diphosphate. It carries out the reaction ent-copalyl diphosphate = ent-kaur-16-ene + diphosphate. The protein operates within secondary metabolite biosynthesis; terpenoid biosynthesis. In terms of biological role, diterpene cyclase involved in the biosynthesis of labdane-related diterpenoids (LRDs) natural products. Catalyzes the cyclization of ent-CDP into ent-beyerene as a major and ent-kaurene and ent-atiserene as minor products. This Ricinus communis (Castor bean) protein is Ent-beyerene synthase KSL4, chloroplastic.